The following is a 248-amino-acid chain: Non-specific acid phosphatase (248 aa).

An N-terminal signal peptide occupies residues 1–20 (MKKLLAVFCAGAFVSTSVFA).

It belongs to the class A bacterial acid phosphatase family.

The protein localises to the periplasm. The catalysed reaction is a phosphate monoester + H2O = an alcohol + phosphate. This Providencia stuartii protein is Non-specific acid phosphatase (phoN).